The chain runs to 436 residues: KICSTOR complex protein kaptin (436 aa).

Position 1 is an N-acetylmethionine (Met-1).

Part of the KICSTOR complex composed of KPTN, ITFG2, KICS2 and SZT2. SZT2 probably serves as a link between the other three proteins in the KICSTOR complex and mediates the direct interaction with the GATOR1 complex. May associate with F-actin filaments.

It is found in the lysosome membrane. The protein localises to the cell projection. The protein resides in the lamellipodium. Its subcellular location is the stereocilium. In terms of biological role, as part of the KICSTOR complex functions in the amino acid-sensing branch of the TORC1 signaling pathway. Recruits, in an amino acid-independent manner, the GATOR1 complex to the lysosomal membranes and allows its interaction with GATOR2 and the RAG GTPases. Functions upstream of the RAG GTPases and is required to negatively regulate mTORC1 signaling in absence of amino acids. In absence of the KICSTOR complex mTORC1 is constitutively localized to the lysosome and activated. The KICSTOR complex is also probably involved in the regulation of mTORC1 by glucose. This is KICSTOR complex protein kaptin from Homo sapiens (Human).